A 128-amino-acid polypeptide reads, in one-letter code: Protein BEX2 (128 aa).

Residues 1 to 44 are disordered; that stretch reads MMPKEEQVLKNLTMENANEENEKKDEKEQDANKGEPLALSLGAG. Residues 20–33 show a composition bias toward basic and acidic residues; that stretch reads ENEKKDEKEQDANK. R50 carries the post-translational modification Omega-N-methylarginine. Residues 103–128 form a disordered region; that stretch reads QLSHSLRAVSTDPPHHEHNDEFCLMP. Over residues 115-128 the composition is skewed to basic and acidic residues; sequence PPHHEHNDEFCLMP. Positions 117–121 are his cluster; sequence HHEHN. C125 is a binding site for Zn(2+).

This sequence belongs to the BEX family. In terms of assembly, interacts with LMO2, possibly leading to regulate the transcriptional activity of a DNA-binding complex containing LMO2. Interacts with OMP.

The protein localises to the cytoplasm. The protein resides in the nucleus. Functionally, regulator of mitochondrial apoptosis and G1 cell cycle. Regulates the level of PP2A regulatory subunit B and PP2A phosphatase activity. In absence of reductive stress, acts as a pseudosubstrate for the CRL2(FEM1B) complex: associates with FEM1B via zinc, thereby preventing association between FEM1B and its substrates. This Bos taurus (Bovine) protein is Protein BEX2 (BEX2).